Consider the following 264-residue polypeptide: Glutamate racemase (264 aa).

Residues 10–11 (DS) and 42–43 (YG) contribute to the substrate site. C73 functions as the Proton donor/acceptor in the catalytic mechanism. 74–75 (NT) contacts substrate. C181 serves as the catalytic Proton donor/acceptor. 182–183 (TH) contacts substrate.

The protein belongs to the aspartate/glutamate racemases family.

The enzyme catalyses L-glutamate = D-glutamate. Its pathway is cell wall biogenesis; peptidoglycan biosynthesis. Provides the (R)-glutamate required for cell wall biosynthesis. The polypeptide is Glutamate racemase (Thermoanaerobacter sp. (strain X514)).